Consider the following 225-residue polypeptide: Uracil-DNA glycosylase (225 aa).

Asp65 functions as the Proton acceptor in the catalytic mechanism.

Belongs to the uracil-DNA glycosylase (UDG) superfamily. UNG family.

It is found in the cytoplasm. The catalysed reaction is Hydrolyzes single-stranded DNA or mismatched double-stranded DNA and polynucleotides, releasing free uracil.. Functionally, excises uracil residues from the DNA which can arise as a result of misincorporation of dUMP residues by DNA polymerase or due to deamination of cytosine. The protein is Uracil-DNA glycosylase of Clostridium perfringens (strain SM101 / Type A).